Here is a 317-residue protein sequence, read N- to C-terminus: Lipoyl synthase (317 aa).

Positions 59, 64, 70, 85, 89, 92, and 298 each coordinate [4Fe-4S] cluster. Residues 71-287 enclose the Radical SAM core domain; it reads WSQRHASFMI…AKIGKAKGFL (217 aa).

Belongs to the radical SAM superfamily. Lipoyl synthase family. Requires [4Fe-4S] cluster as cofactor.

It localises to the cytoplasm. It carries out the reaction [[Fe-S] cluster scaffold protein carrying a second [4Fe-4S](2+) cluster] + N(6)-octanoyl-L-lysyl-[protein] + 2 oxidized [2Fe-2S]-[ferredoxin] + 2 S-adenosyl-L-methionine + 4 H(+) = [[Fe-S] cluster scaffold protein] + N(6)-[(R)-dihydrolipoyl]-L-lysyl-[protein] + 4 Fe(3+) + 2 hydrogen sulfide + 2 5'-deoxyadenosine + 2 L-methionine + 2 reduced [2Fe-2S]-[ferredoxin]. The protein operates within protein modification; protein lipoylation via endogenous pathway; protein N(6)-(lipoyl)lysine from octanoyl-[acyl-carrier-protein]: step 2/2. Functionally, catalyzes the radical-mediated insertion of two sulfur atoms into the C-6 and C-8 positions of the octanoyl moiety bound to the lipoyl domains of lipoate-dependent enzymes, thereby converting the octanoylated domains into lipoylated derivatives. The protein is Lipoyl synthase of Bartonella bacilliformis (strain ATCC 35685 / KC583 / Herrer 020/F12,63).